A 385-amino-acid polypeptide reads, in one-letter code: uncharacterized protein (385 aa).

8 helical membrane-spanning segments follow: residues 17–37 (ILII…FIFT), 72–92 (TELM…WFLL), 107–127 (WILK…KCIT), 155–175 (ICLI…FYII), 191–211 (WIQA…LVLL), 295–315 (AFPS…FYFL), 326–346 (ITLL…IVVN), and 354–374 (ITFT…FNSF).

It is found in the membrane. This is an uncharacterized protein from Mycoplasma capricolum subsp. capricolum (strain California kid / ATCC 27343 / NCTC 10154).